We begin with the raw amino-acid sequence, 434 residues long: Nuclear distribution protein PAC1 (434 aa).

The LisH domain maps to 8–40 (QKDDLHKAMLDYLYANNHTAAFNALKESAGITY). Positions 57–83 (TSVIRLQKKIMELENRNAALQEELSMS) form a coiled coil. WD repeat units follow at residues 106–147 (GHRA…RTLK), 149–187 (HTKP…KNTK), 191–230 (GHDH…QVRT), 233–272 (GHSE…PKSE), 275–334 (GHEN…MIRN), 337–378 (GHDN…RIVE), and 401–434 (KKVN…IWLP).

This sequence belongs to the WD repeat LIS1/nudF family. In terms of assembly, self-associates. Interacts with NDL1 and dynein.

It is found in the cytoplasm. It localises to the cytoskeleton. Its subcellular location is the spindle pole. Its function is as follows. Positively regulates the activity of the minus-end directed microtubule motor protein dynein. May enhance dynein-mediated microtubule sliding by targeting dynein to the microtubule plus end. Required for nuclear migration during vegetative growth as well as development. Required for retrograde early endosome (EE) transport from the hyphal tip. Required for localization of dynein to the mitotic spindle poles. Recruits additional proteins to the dynein complex at SPBs. This chain is Nuclear distribution protein PAC1, found in Coprinopsis cinerea (strain Okayama-7 / 130 / ATCC MYA-4618 / FGSC 9003) (Inky cap fungus).